Reading from the N-terminus, the 448-residue chain is Guanine deaminase (448 aa).

The Zn(2+) site is built by histidine 74 and histidine 76. Substrate contacts are provided by residues 76-79 (HAPQ), 204-205 (RF), 231-234 (HISE), and aspartate 319. Zn(2+)-binding residues include histidine 231 and aspartate 319.

This sequence belongs to the metallo-dependent hydrolases superfamily. ATZ/TRZ family. Requires Zn(2+) as cofactor.

It carries out the reaction guanine + H2O + H(+) = xanthine + NH4(+). It participates in purine metabolism; guanine degradation; xanthine from guanine: step 1/1. Its activity is regulated as follows. Strongly inhibited by p-chloromercuribenzoate (PCMB). Potassium cyanide (KCN) strongly inhibits activity towards 7,8-dihydropterin but has almost no effect on activity towards guanine. Pterin inhibits activity towards guanine but has little effect on activity towards 7,8-dihydropterin. In terms of biological role, catalyzes the hydrolytic deamination of guanine, producing xanthine and ammonia. Also has 7,8-dihydropterin deaminase activity, which plays a role in synthesis of the red eye pigment aurodrosopterin. The chain is Guanine deaminase from Drosophila melanogaster (Fruit fly).